We begin with the raw amino-acid sequence, 403 residues long: Histidine--tRNA ligase (403 aa).

It belongs to the class-II aminoacyl-tRNA synthetase family. Homodimer.

It localises to the cytoplasm. The catalysed reaction is tRNA(His) + L-histidine + ATP = L-histidyl-tRNA(His) + AMP + diphosphate + H(+). The protein is Histidine--tRNA ligase of Sulfurimonas denitrificans (strain ATCC 33889 / DSM 1251) (Thiomicrospira denitrificans (strain ATCC 33889 / DSM 1251)).